A 33-amino-acid polypeptide reads, in one-letter code: Brevinin-2PTe (33 aa).

Residues cysteine 27 and cysteine 33 are joined by a disulfide bond.

In terms of tissue distribution, expressed by the skin glands.

It is found in the secreted. Functionally, has antibacterial activity against the Gram-positive bacterium S.aureus ATCC 25923 (MIC=36 uM) and the Gram-negative bacterium E.coli ATCC 25726 (MIC=18 uM). The sequence is that of Brevinin-2PTe from Pulchrana picturata (Malaysian fire frog).